A 488-amino-acid polypeptide reads, in one-letter code: N-succinylglutamate 5-semialdehyde dehydrogenase (488 aa).

221-226 is an NAD(+) binding site; it reads GSSRTG. Active-site residues include Glu-244 and Cys-278.

It belongs to the aldehyde dehydrogenase family. AstD subfamily.

The catalysed reaction is N-succinyl-L-glutamate 5-semialdehyde + NAD(+) + H2O = N-succinyl-L-glutamate + NADH + 2 H(+). It participates in amino-acid degradation; L-arginine degradation via AST pathway; L-glutamate and succinate from L-arginine: step 4/5. Its function is as follows. Catalyzes the NAD-dependent reduction of succinylglutamate semialdehyde into succinylglutamate. The polypeptide is N-succinylglutamate 5-semialdehyde dehydrogenase (Pseudomonas fluorescens (strain Pf0-1)).